The chain runs to 464 residues: Argininosuccinate lyase (464 aa).

This sequence belongs to the lyase 1 family. Argininosuccinate lyase subfamily.

Its subcellular location is the cytoplasm. The catalysed reaction is 2-(N(omega)-L-arginino)succinate = fumarate + L-arginine. It functions in the pathway amino-acid biosynthesis; L-arginine biosynthesis; L-arginine from L-ornithine and carbamoyl phosphate: step 3/3. In Sulfurovum sp. (strain NBC37-1), this protein is Argininosuccinate lyase.